Consider the following 262-residue polypeptide: Indole-3-glycerol phosphate synthase (262 aa).

Belongs to the TrpC family.

The enzyme catalyses 1-(2-carboxyphenylamino)-1-deoxy-D-ribulose 5-phosphate + H(+) = (1S,2R)-1-C-(indol-3-yl)glycerol 3-phosphate + CO2 + H2O. Its pathway is amino-acid biosynthesis; L-tryptophan biosynthesis; L-tryptophan from chorismate: step 4/5. This chain is Indole-3-glycerol phosphate synthase, found in Bordetella petrii (strain ATCC BAA-461 / DSM 12804 / CCUG 43448).